Reading from the N-terminus, the 394-residue chain is 1-deoxy-D-xylulose 5-phosphate reductoisomerase (394 aa).

Thr-12, Gly-13, Ser-14, Ile-15, Lys-39, Gln-40, and Asn-126 together coordinate NADPH. Position 127 (Lys-127) interacts with 1-deoxy-D-xylulose 5-phosphate. Glu-128 serves as a coordination point for NADPH. Asp-152 lines the Mn(2+) pocket. The 1-deoxy-D-xylulose 5-phosphate site is built by Ser-153, Glu-154, Ser-183, and His-206. Residue Glu-154 coordinates Mn(2+). Position 212 (Gly-212) interacts with NADPH. Residues Ser-219, Asn-224, Lys-225, and Glu-228 each contribute to the 1-deoxy-D-xylulose 5-phosphate site. Glu-228 contacts Mn(2+).

The protein belongs to the DXR family. It depends on Mg(2+) as a cofactor. Requires Mn(2+) as cofactor.

It catalyses the reaction 2-C-methyl-D-erythritol 4-phosphate + NADP(+) = 1-deoxy-D-xylulose 5-phosphate + NADPH + H(+). It functions in the pathway isoprenoid biosynthesis; isopentenyl diphosphate biosynthesis via DXP pathway; isopentenyl diphosphate from 1-deoxy-D-xylulose 5-phosphate: step 1/6. In terms of biological role, catalyzes the NADPH-dependent rearrangement and reduction of 1-deoxy-D-xylulose-5-phosphate (DXP) to 2-C-methyl-D-erythritol 4-phosphate (MEP). This chain is 1-deoxy-D-xylulose 5-phosphate reductoisomerase, found in Neisseria gonorrhoeae (strain ATCC 700825 / FA 1090).